A 70-amino-acid chain; its full sequence is Conotoxin Pl171 (70 aa).

The N-terminal stretch at 1–21 (MGMRMMFTMILLVVLVTTVVS) is a signal peptide. 2 disulfides stabilise this stretch: Cys-54–Cys-61 and Cys-55–Cys-67. Phe-69 carries the post-translational modification Phenylalanine amide.

It belongs to the conotoxin A superfamily. As to expression, expressed by the venom duct.

The protein localises to the secreted. Its function is as follows. Probable neurotoxin with unknown target. Possibly targets ion channels. The sequence is that of Conotoxin Pl171 from Conus planorbis (Planorbis cone).